The primary structure comprises 248 residues: Granulin (248 aa).

This sequence belongs to the polyhedrin family.

In terms of biological role, component of the virus occlusion bodies, which are large proteinaceous structures, that protect the virus from the outside environment for extended periods until they are ingested by insect larvae. The polypeptide is Granulin (Zygaenidae (burnets)).